Here is a 633-residue protein sequence, read N- to C-terminus: Chaperone protein HtpG (633 aa).

The a; substrate-binding stretch occupies residues 1-344; the sequence is MSLQPQAETL…SNDLPLNISR (344 aa). A b region spans residues 345 to 560; it reads ELLQSNEVIN…ENEMSGHLQR (216 aa). The segment at 561 to 633 is c; that stretch reads LLIQTGQDFM…KGLNELLLDS (73 aa).

The protein belongs to the heat shock protein 90 family. In terms of assembly, homodimer.

It is found in the cytoplasm. In terms of biological role, molecular chaperone. Has ATPase activity. The protein is Chaperone protein HtpG of Coxiella burnetii (strain RSA 493 / Nine Mile phase I).